The sequence spans 134 residues: Acyl carrier protein SF2, chloroplastic (134 aa).

Residues 1 to 51 constitute a chloroplast transit peptide; it reads MSTTFCSSVSMQATSLAATTRISFQKPALVSTTNLSFNLRRSIPTRFSISC. In terms of domain architecture, Carrier spans 55 to 130; the sequence is PETVEKVSKI…EAAELIEELV (76 aa). Ser-90 is modified (O-(pantetheine 4'-phosphoryl)serine).

Belongs to the acyl carrier protein (ACP) family. In terms of processing, 4'-phosphopantetheine is transferred from CoA to a specific serine of apo-ACP by acpS. This modification is essential for activity because fatty acids are bound in thioester linkage to the sulfhydryl of the prosthetic group.

The protein resides in the plastid. Its subcellular location is the chloroplast. Its pathway is lipid metabolism; fatty acid biosynthesis. In terms of biological role, carrier of the growing fatty acid chain in fatty acid biosynthesis. This Brassica campestris (Field mustard) protein is Acyl carrier protein SF2, chloroplastic (Acl1.1).